Consider the following 448-residue polypeptide: Asparagine--tRNA ligase (448 aa).

It belongs to the class-II aminoacyl-tRNA synthetase family. Homodimer.

It is found in the cytoplasm. It catalyses the reaction tRNA(Asn) + L-asparagine + ATP = L-asparaginyl-tRNA(Asn) + AMP + diphosphate + H(+). The polypeptide is Asparagine--tRNA ligase (Streptococcus thermophilus (strain CNRZ 1066)).